A 197-amino-acid polypeptide reads, in one-letter code: MKVKEVIFAGRSNVGKSTLFSALFKFEVRKGKKPGTTIRPNSFQVGSVIFTDLPGFGYVSGYSRNFSERVKDFVVEYIETNARRIVASVEVIDASSFLEIAERWEKRGYIPVEIEMFEFLNDVTPRVFLAANKMDKVDDITNLNKIAEMLGMQPPWEKWRHVIYPVCAKKGEVSALKRDLKQYLLSLNLRDAAKAFR.

Residues 2 to 186 (KVKEVIFAGR…KRDLKQYLLS (185 aa)) form the EngB-type G domain. GTP is bound by residues 10–17 (GRSNVGKS), 35–39 (GTTIR), 52–55 (DLPG), 132–135 (NKMD), and 166–168 (VCA). Serine 17 and threonine 37 together coordinate Mg(2+).

Belongs to the TRAFAC class TrmE-Era-EngA-EngB-Septin-like GTPase superfamily. EngB GTPase family. Mg(2+) is required as a cofactor.

Necessary for normal cell division and for the maintenance of normal septation. This Archaeoglobus fulgidus (strain ATCC 49558 / DSM 4304 / JCM 9628 / NBRC 100126 / VC-16) protein is Probable GTP-binding protein EngB.